Here is a 308-residue protein sequence, read N- to C-terminus: Aspartate carbamoyltransferase catalytic subunit (308 aa).

2 residues coordinate carbamoyl phosphate: R49 and T50. Residue K77 coordinates L-aspartate. R99, H127, and Q130 together coordinate carbamoyl phosphate. 2 residues coordinate L-aspartate: R160 and R211. Positions 252 and 253 each coordinate carbamoyl phosphate.

Belongs to the aspartate/ornithine carbamoyltransferase superfamily. ATCase family. In terms of assembly, heterododecamer (2C3:3R2) of six catalytic PyrB chains organized as two trimers (C3), and six regulatory PyrI chains organized as three dimers (R2).

The enzyme catalyses carbamoyl phosphate + L-aspartate = N-carbamoyl-L-aspartate + phosphate + H(+). Its pathway is pyrimidine metabolism; UMP biosynthesis via de novo pathway; (S)-dihydroorotate from bicarbonate: step 2/3. In terms of biological role, catalyzes the condensation of carbamoyl phosphate and aspartate to form carbamoyl aspartate and inorganic phosphate, the committed step in the de novo pyrimidine nucleotide biosynthesis pathway. The protein is Aspartate carbamoyltransferase catalytic subunit of Geobacillus kaustophilus (strain HTA426).